The chain runs to 338 residues: Erlin-2 (338 aa).

The Cytoplasmic segment spans residues 1 to 3 (MAQ). The helical transmembrane segment at 4-24 (LGAVVAVAASFFCASLFSAVH) threads the bilayer. Residues 25-338 (KIEEGHIGVY…DEPMEADSEN (314 aa)) are Lumenal-facing. Asn-106 is a glycosylation site (N-linked (GlcNAc...) asparagine). Residues 177-309 (EAIRRNYELM…DIPNMFMDSA (133 aa)) are interaction with ERLIN1. An N6-acetyllysine modification is found at Lys-267.

Belongs to the band 7/mec-2 family. In terms of assembly, forms a heteromeric complex with ERLIN1. In complex with ERLIN1, interacts with RNF170. Interacts with activated ITPR1, independently of the degree of ITPR1 polyubiquitination. Interacts with SCAP, INSIG1, SREBF1 and SREBF2 under cholesterol sufficiency conditions; indicative for an association with the SCAP-SREBP-INSIG complex. Probably part of an AMFR/gp78 and INSIG1-containing ubiquitin ligase complex involved in ERAD of HMGCR. Interacts with TMUB1; TMUB1 bridges the association with AMFR. Interacts with SYVN1 and RNF139. Interacts with TMEM259. Interacts with TMEM41B. Post-translationally, deubiquitinated by USP25; leading to stabilization.

It is found in the endoplasmic reticulum membrane. In terms of biological role, component of the ERLIN1/ERLIN2 complex which mediates the endoplasmic reticulum-associated degradation (ERAD) of inositol 1,4,5-trisphosphate receptors (IP3Rs) such as ITPR1. Promotes sterol-accelerated ERAD of HMGCR probably implicating an AMFR/gp78-containing ubiquitin ligase complex. Involved in regulation of cellular cholesterol homeostasis by regulation the SREBP signaling pathway. May promote ER retention of the SCAP-SREBF complex. The polypeptide is Erlin-2 (ERLIN2) (Bos taurus (Bovine)).